Here is a 438-residue protein sequence, read N- to C-terminus: Fibrous sheath-interacting protein 1 (438 aa).

Positions 1–111 (MSMDIIKGNL…PEHSDDPKLE (111 aa)) are disordered. Residues 18-32 (SSSRSRPGSRSSNGS) are compositionally biased toward low complexity. Positions 53 to 72 (SGKEGHTSDSRVEERRKISD) are enriched in basic and acidic residues. Residues Ser71, Ser88, and Ser89 each carry the phosphoserine modification. Residues 131 to 157 (LAKRRIREKEIKKQGLEMRIKLWEELK) adopt a coiled-coil conformation. The disordered stretch occupies residues 354–390 (SQSNKGDMEHDSNEERNTEPTPGEKILRDNKEQRDRE). Basic and acidic residues-rich tracts occupy residues 359–371 (GDME…ERNT) and 378–390 (KILR…RDRE).

It belongs to the FSIP1 family.

This chain is Fibrous sheath-interacting protein 1 (Fsip1), found in Rattus norvegicus (Rat).